Here is a 396-residue protein sequence, read N- to C-terminus: Putative carbamoyltransferase YgeW (396 aa).

Residues 71 to 74 (STRT), Gln-98, 165 to 168 (HPTQ), and 330 to 331 (CL) each bind carbamoyl phosphate.

This sequence belongs to the aspartate/ornithine carbamoyltransferase superfamily. Homotrimer.

In Escherichia coli O157:H7, this protein is Putative carbamoyltransferase YgeW (ygeW).